We begin with the raw amino-acid sequence, 257 residues long: MADS-box transcription factor 1 (257 aa).

Residues 1–61 (MGRGKVELKR…GRLFEFSSSS (61 aa)) enclose the MADS-box domain. Positions 85 to 175 (NEINYQEYLK…RKKLQETSAE (91 aa)) constitute a K-box domain.

In terms of assembly, may interact with the K-box of MADS6, MADS14 and MADS15.

Its subcellular location is the nucleus. In terms of biological role, probable transcription factor involved in the development of floral organs. Required for the formation of inner floral organs (lodicules, stamens and carpels, or whorls 2, 3 and 4) and the lemma and palea (whorl 1), which are grass floral organs analogous to sepals. May be involved in the control of flowering time. Seems to act as transcriptional activator. May act upstream of the auxin-responsive protein GH3.8. This is MADS-box transcription factor 1 (MADS1) from Oryza sativa subsp. indica (Rice).